A 312-amino-acid chain; its full sequence is Taste receptor type 2 member 62 (312 aa).

Topologically, residues 1–4 are extracellular; sequence MPSL. A helical transmembrane segment spans residues 5–27; it reads PTLIFIAIFCLESLAAMLQNGFL. The Cytoplasmic segment spans residues 28-39; sequence VTMLGREWVRCR. Residues 40–62 form a helical membrane-spanning segment; sequence MLSTSDMIVACLAASRFCLHGVA. Over 63 to 81 the chain is Extracellular; the sequence is MANNLLASLDFSRAVPYMN. Residues 82 to 104 form a helical membrane-spanning segment; sequence IFWDLFNALTLWFTALLAAFYCV. At 105–127 the chain is on the cytoplasmic side; it reads KISSFSHPTFAWLKWRISRLVPK. Residues 128–150 traverse the membrane as a helical segment; the sequence is LIKGSLIICGLEVISSATGNILF. Residues 151–182 lie on the Extracellular side of the membrane; that stretch reads GQRKVSLSSYRNETLVYRVQASFQLYFFLYDG. N-linked (GlcNAc...) asparagine glycosylation is present at N162. The chain crosses the membrane as a helical span at residues 183–205; that stretch reads FVWSIPFLLFLVSTVLLIVSLCW. At 206–231 the chain is on the cytoplasmic side; sequence QLGQMRDLRPGPCDPSTQAYTMALKS. Residues 232-254 form a helical membrane-spanning segment; it reads LTFSLIFCTLYFLSLFASALKII. At 255–258 the chain is on the extracellular side; the sequence is NFQN. Residues 259 to 281 traverse the membrane as a helical segment; the sequence is HWHWAWEVLIYANICLHSTVLVL. Residues 282 to 312 lie on the Cytoplasmic side of the membrane; sequence RSPKLKKGLKTWPQLQCPCDAGSQGFGRCWP.

The protein belongs to the G-protein coupled receptor T2R family.

Its subcellular location is the membrane. In terms of biological role, receptor that may play a role in the perception of bitterness and is gustducin-linked. May play a role in sensing the chemical composition of the gastrointestinal content. The activity of this receptor may stimulate alpha gustducin, mediate PLC-beta-2 activation and lead to the gating of TRPM5. The sequence is that of Taste receptor type 2 member 62 (TAS2R62) from Pan paniscus (Pygmy chimpanzee).